Reading from the N-terminus, the 384-residue chain is MGLVCSRNRRYRDSDPEENAQAAEIERRIESETKAEKHIQKLLLLGAGESGKSTIFKQIKLLFQTGFDEAELRSYTPVIFANVYQTIKVLHDGAKELAQNDLNSAKYVISDESKDIGEKLSEIGSRLDYPHLTKDLAKEIETLWEDAAIQETYARGNELQVPDCTKYFMENLQRLSDANYVPTKGDVLYARVRTTGVVEIQFSPVGENKRSGEVYRLFDVGGQRNERRKWIHLFEGVTAVIFCAAISEYDQTLFEDESKNRLMETKELFEWILKQPCFEKTSFMLFLNKFDIFEKKILNVPLNVCEWFKDYQPVSSGKQEIEHAYEFVKKKFEELYFQSSAPDRVDRVFKIYRTTALDQKVVKKTFKLVDETLRRRNLFEAGLL.

Residues 1–23 are disordered; it reads MGLVCSRNRRYRDSDPEENAQAA. Gly2 is lipidated: N-myristoyl glycine. Residue Cys5 is the site of S-palmitoyl cysteine attachment. Residues 38 to 384 enclose the G-alpha domain; the sequence is HIQKLLLLGA…RRNLFEAGLL (347 aa). Residues 41 to 54 form a G1 motif region; the sequence is KLLLLGAGESGKST. The GTP site is built by Glu49, Ser50, Gly51, Lys52, Ser53, Thr54, Asp163, Leu188, Tyr189, Thr194, Gly222, Asn288, Lys289, Asp291, and Ala356. Ser53 contributes to the Mg(2+) binding site. The interval 186 to 194 is G2 motif; the sequence is DVLYARVRT. Position 194 (Thr194) interacts with Mg(2+). Residues 215 to 224 are G3 motif; sequence YRLFDVGGQR. The interval 284 to 291 is G4 motif; sequence MLFLNKFD. The tract at residues 354-359 is G5 motif; that stretch reads TTALDQ.

Belongs to the G-alpha family. As to quaternary structure, g proteins are composed of 3 units; alpha, beta and gamma. The alpha chain contains the guanine nucleotide binding site. Mg(2+) is required as a cofactor.

Its function is as follows. Guanine nucleotide-binding proteins (G proteins) are involved as modulators or transducers in various transmembrane signaling systems. This is Guanine nucleotide-binding protein alpha-2 subunit (GPA2) from Pisum sativum (Garden pea).